Consider the following 219-residue polypeptide: 3-dehydroquinate dehydratase (219 aa).

Residues 34 to 36 (ELR) and Arg63 each bind 3-dehydroquinate. His114 functions as the Proton donor/acceptor in the catalytic mechanism. The Schiff-base intermediate with substrate role is filled by Lys139. Residues Arg174, Thr193, and Gln197 each coordinate 3-dehydroquinate.

Belongs to the type-I 3-dehydroquinase family. In terms of assembly, homodimer.

The enzyme catalyses 3-dehydroquinate = 3-dehydroshikimate + H2O. It functions in the pathway metabolic intermediate biosynthesis; chorismate biosynthesis; chorismate from D-erythrose 4-phosphate and phosphoenolpyruvate: step 3/7. In terms of biological role, involved in the third step of the chorismate pathway, which leads to the biosynthesis of aromatic amino acids. Catalyzes the cis-dehydration of 3-dehydroquinate (DHQ) and introduces the first double bond of the aromatic ring to yield 3-dehydroshikimate. The protein is 3-dehydroquinate dehydratase of Sulfolobus acidocaldarius (strain ATCC 33909 / DSM 639 / JCM 8929 / NBRC 15157 / NCIMB 11770).